Here is a 66-residue protein sequence, read N- to C-terminus: Small ribosomal subunit protein bS21B (66 aa).

A disordered region spans residues 38 to 66 (YVKPTQKRKIAKKAAISKAKKEARRSYSY).

It belongs to the bacterial ribosomal protein bS21 family.

The sequence is that of Small ribosomal subunit protein bS21B from Francisella tularensis subsp. tularensis (strain SCHU S4 / Schu 4).